A 328-amino-acid chain; its full sequence is Oligopeptide transport ATP-binding protein AppD (328 aa).

The ABC transporter domain occupies 5–256; that stretch reads LEVNNLKTYF…PLHPYTEGLL (252 aa). Residue 41–48 coordinates ATP; it reads GESGSGKS.

The protein belongs to the ABC transporter superfamily.

It localises to the cell membrane. This protein is a component of an oligopeptide permease, a binding protein-dependent transport system. This APP system can completely substitute for the OPP system in both sporulation and genetic competence, though, unlike OPP, is incapable of transporting tripeptides. Probably responsible for energy coupling to the transport system. The sequence is that of Oligopeptide transport ATP-binding protein AppD (appD) from Bacillus subtilis (strain 168).